Here is a 160-residue protein sequence, read N- to C-terminus: SsrA-binding protein (160 aa).

The protein belongs to the SmpB family.

The protein resides in the cytoplasm. In terms of biological role, required for rescue of stalled ribosomes mediated by trans-translation. Binds to transfer-messenger RNA (tmRNA), required for stable association of tmRNA with ribosomes. tmRNA and SmpB together mimic tRNA shape, replacing the anticodon stem-loop with SmpB. tmRNA is encoded by the ssrA gene; the 2 termini fold to resemble tRNA(Ala) and it encodes a 'tag peptide', a short internal open reading frame. During trans-translation Ala-aminoacylated tmRNA acts like a tRNA, entering the A-site of stalled ribosomes, displacing the stalled mRNA. The ribosome then switches to translate the ORF on the tmRNA; the nascent peptide is terminated with the 'tag peptide' encoded by the tmRNA and targeted for degradation. The ribosome is freed to recommence translation, which seems to be the essential function of trans-translation. The chain is SsrA-binding protein from Actinobacillus succinogenes (strain ATCC 55618 / DSM 22257 / CCUG 43843 / 130Z).